Consider the following 69-residue polypeptide: Beta-defensin 1 (69 aa).

The N-terminal stretch at 1 to 21 (MKTHYFLLVMICFLFSQMEPG) is a signal peptide. Residues 22-32 (VGILTSLGRRT) constitute a propeptide that is removed on maturation. Cystine bridges form between C37–C66, C44–C59, and C49–C67.

Belongs to the beta-defensin family. Monomer. Homodimer. Detected in kidney.

Its subcellular location is the secreted. It is found in the membrane. Its function is as follows. Has bactericidal activity. May act as a ligand for C-C chemokine receptor CCR6. Positively regulates the sperm motility and bactericidal activity in a CCR6-dependent manner. Binds to CCR6 and triggers Ca2+ mobilization in the sperm which is important for its motility. The chain is Beta-defensin 1 (Defb1) from Mus musculus (Mouse).